We begin with the raw amino-acid sequence, 434 residues long: Trigger factor (434 aa).

The PPIase FKBP-type domain maps to 161 to 246 (EDRVTVDFSG…LKKVEERELP (86 aa)).

This sequence belongs to the FKBP-type PPIase family. Tig subfamily.

It localises to the cytoplasm. The enzyme catalyses [protein]-peptidylproline (omega=180) = [protein]-peptidylproline (omega=0). In terms of biological role, involved in protein export. Acts as a chaperone by maintaining the newly synthesized protein in an open conformation. Functions as a peptidyl-prolyl cis-trans isomerase. In Serratia proteamaculans (strain 568), this protein is Trigger factor.